A 190-amino-acid polypeptide reads, in one-letter code: NAD(P)H-quinone oxidoreductase subunit I (190 aa).

2 consecutive 4Fe-4S ferredoxin-type domains span residues Gly-55–Thr-84 and Lys-95–Glu-124. [4Fe-4S] cluster-binding residues include Cys-64, Cys-67, Cys-70, Cys-74, Cys-104, Cys-107, Cys-110, and Cys-114. Residues Ile-169–Asp-190 are disordered.

Belongs to the complex I 23 kDa subunit family. NDH-1 is composed of at least 11 different subunits. [4Fe-4S] cluster serves as cofactor.

It is found in the cellular thylakoid membrane. The catalysed reaction is a plastoquinone + NADH + (n+1) H(+)(in) = a plastoquinol + NAD(+) + n H(+)(out). It carries out the reaction a plastoquinone + NADPH + (n+1) H(+)(in) = a plastoquinol + NADP(+) + n H(+)(out). Functionally, NDH-1 shuttles electrons from an unknown electron donor, via FMN and iron-sulfur (Fe-S) centers, to quinones in the respiratory and/or the photosynthetic chain. The immediate electron acceptor for the enzyme in this species is believed to be plastoquinone. Couples the redox reaction to proton translocation, and thus conserves the redox energy in a proton gradient. This Microcystis aeruginosa (strain NIES-843 / IAM M-2473) protein is NAD(P)H-quinone oxidoreductase subunit I.